Here is a 591-residue protein sequence, read N- to C-terminus: ATP-dependent lipid A-core flippase (591 aa).

The next 5 membrane-spanning stretches (helical) occupy residues 34-54 (LILAVLLMAGAAATQPTLAVI), 71-91 (IWSVPLAVIGLILLRGVCNFF), 158-178 (LVVISLIAVLLYMSWLLTVII), 258-278 (LTPLTQVCIAVAVGAVIAVAL), and 285-305 (TLTAGAFAAFMSALAQIFDPI). The ABC transmembrane type-1 domain maps to 35–317 (ILAVLLMAGA…LTNLASKMQK (283 aa)). Positions 350–586 (IEFRQIGHRF…GGLYATLYNM (237 aa)) constitute an ABC transporter domain. Position 384–391 (384–391 (GRSGSGKT)) interacts with ATP.

Belongs to the ABC transporter superfamily. Lipid exporter (TC 3.A.1.106) family. Homodimer.

Its subcellular location is the cell inner membrane. The catalysed reaction is ATP + H2O + lipid A-core oligosaccharideSide 1 = ADP + phosphate + lipid A-core oligosaccharideSide 2.. In terms of biological role, involved in lipopolysaccharide (LPS) biosynthesis. Translocates lipid A-core from the inner to the outer leaflet of the inner membrane. Transmembrane domains (TMD) form a pore in the inner membrane and the ATP-binding domain (NBD) is responsible for energy generation. In Bordetella avium (strain 197N), this protein is ATP-dependent lipid A-core flippase.